Consider the following 197-residue polypeptide: UDP-N-acetylglucosamine transferase subunit ALG13 (197 aa).

Belongs to the glycosyltransferase 28 family. As to quaternary structure, heterodimer with ALG14 to form a functional enzyme.

The protein resides in the endoplasmic reticulum. It catalyses the reaction an N-acetyl-alpha-D-glucosaminyl-diphospho-di-trans,poly-cis-dolichol + UDP-N-acetyl-alpha-D-glucosamine = an N,N'-diacetylchitobiosyl-diphospho-di-trans,poly-cis-dolichol + UDP + H(+). Functionally, involved in protein N-glycosylation. Essential for the second step of the dolichol-linked oligosaccharide pathway. The sequence is that of UDP-N-acetylglucosamine transferase subunit ALG13 (ALG13) from Kluyveromyces lactis (strain ATCC 8585 / CBS 2359 / DSM 70799 / NBRC 1267 / NRRL Y-1140 / WM37) (Yeast).